The chain runs to 290 residues: Protein 3 (290 aa).

The polypeptide is Protein 3 (Lettuce big-vein associated virus (isolate Japan/Kagawa) (LBVaV)).